A 185-amino-acid polypeptide reads, in one-letter code: Peptide deformylase (185 aa).

2 residues coordinate Fe cation: Cys-109 and His-152. Glu-153 is a catalytic residue. Residue His-156 coordinates Fe cation.

The protein belongs to the polypeptide deformylase family. Fe(2+) serves as cofactor.

The catalysed reaction is N-terminal N-formyl-L-methionyl-[peptide] + H2O = N-terminal L-methionyl-[peptide] + formate. Removes the formyl group from the N-terminal Met of newly synthesized proteins. Requires at least a dipeptide for an efficient rate of reaction. N-terminal L-methionine is a prerequisite for activity but the enzyme has broad specificity at other positions. In Roseiflexus sp. (strain RS-1), this protein is Peptide deformylase.